Here is a 329-residue protein sequence, read N- to C-terminus: G-protein coupled bile acid receptor 1 (329 aa).

At 1 to 19 the chain is on the extracellular side; that stretch reads MTSNSTREVPSPVPAGALG. A glycan (N-linked (GlcNAc...) asparagine) is linked at N4. The chain crosses the membrane as a helical span at residues 20–40; the sequence is LSLALASLIVAANLLLAVGIA. The Cytoplasmic segment spans residues 41–52; it reads GDRRLRSPPAGC. A helical membrane pass occupies residues 53–73; it reads FFLSLLLAGLLTGLALPALPV. Over 74–85 the chain is Extracellular; it reads LWSQSRRGYWSC. Cysteines 85 and 155 form a disulfide. The helical transmembrane segment at 86-106 threads the bilayer; it reads LFLYLAPNFCFLSLLANLLLV. At 107-125 the chain is on the cytoplasmic side; that stretch reads HGERYMAVLRPLRPRGSMR. A helical transmembrane segment spans residues 126 to 146; it reads LALLLTWAAPLLFASLPALGW. The Extracellular segment spans residues 147-165; that stretch reads NHWAPGGNCSSQAVFPAPY. The N-linked (GlcNAc...) asparagine glycan is linked to N154. Residues 166-186 form a helical membrane-spanning segment; that stretch reads LYLEIYGLLLPAVGAAALLSV. Residues 187–230 lie on the Cytoplasmic side of the membrane; sequence RVLVTAHRQLQDIRRLERAVCRGAPSALARALTWRQARAQAGAT. The chain crosses the membrane as a helical span at residues 231 to 251; it reads LLFGLCWGPYVATLLLSVLAF. The Extracellular segment spans residues 252–261; sequence EQRPPLGPGT. A helical transmembrane segment spans residues 262-282; it reads LLSLISLGSASAAAVPVAMGL. Over 283 to 329 the chain is Cytoplasmic; the sequence is GDQRYTGPWRVAAQKWLRMLRGRPQSSPGPSTAYHTSSQSSVDLDLN. Residues 304-329 are disordered; sequence GRPQSSPGPSTAYHTSSQSSVDLDLN. A compositionally biased stretch (polar residues) spans 306–329; that stretch reads PQSSPGPSTAYHTSSQSSVDLDLN.

This sequence belongs to the G-protein coupled receptor 1 family.

The protein resides in the cell membrane. Functionally, receptor for bile acid. Bile acid-binding induces its internalization, activation of extracellular signal-regulated kinase and intracellular cAMP production. May be involved in the suppression of macrophage functions by bile acids. Involved in bile acid promoted GLP1R secretion. The sequence is that of G-protein coupled bile acid receptor 1 (GPBAR1) from Bos taurus (Bovine).